A 494-amino-acid chain; its full sequence is Sulfate adenylyltransferase subunit 1 (494 aa).

A tr-type G domain is found at 24 to 240 (TRPLRLITCG…LELATVRSAQ (217 aa)). The segment at 33–40 (GSVDDGKS) is G1. 33 to 40 (GSVDDGKS) contributes to the GTP binding site. The segment at 91–95 (GITID) is G2. Residues 112–115 (DTPG) form a G3 region. Residues 112-116 (DTPGH) and 167-170 (NKID) each bind GTP. A G4 region spans residues 167-170 (NKID). The tract at residues 204–206 (SAL) is G5.

This sequence belongs to the TRAFAC class translation factor GTPase superfamily. Classic translation factor GTPase family. CysN/NodQ subfamily. Heterodimer composed of CysD, the smaller subunit, and CysN.

The catalysed reaction is sulfate + ATP + H(+) = adenosine 5'-phosphosulfate + diphosphate. It functions in the pathway sulfur metabolism; hydrogen sulfide biosynthesis; sulfite from sulfate: step 1/3. Its function is as follows. With CysD forms the ATP sulfurylase (ATPS) that catalyzes the adenylation of sulfate producing adenosine 5'-phosphosulfate (APS) and diphosphate, the first enzymatic step in sulfur assimilation pathway. APS synthesis involves the formation of a high-energy phosphoric-sulfuric acid anhydride bond driven by GTP hydrolysis by CysN coupled to ATP hydrolysis by CysD. In Rhizobium rhizogenes (strain K84 / ATCC BAA-868) (Agrobacterium radiobacter), this protein is Sulfate adenylyltransferase subunit 1.